Consider the following 864-residue polypeptide: MSTPTTSGSAAKPTRPARSSSLATRSCSNSGSLTSFQAMVELKQKILTSISKLADRDTYQIAVEDLEKTIQSLTPETLPMFLNCLYDSCSDPKPAVKKECLHLLSYVCSLHCDSTAAHLTKIIAQIVKRLKDSDSGVRDACRDTIGALSGIYLKGKEEGTNTGSASLAVGLFVKPLFEAMGEQNKVVQSGASMCMARMVESAASPPVTSFQKLCPRICKLLSNSSFLAKASLLPVVSSLSQVGAIAPQSLESLLESIHDCLGSTDWVTRKAAAETLTALASHSSGLIKEKTDSTITVLETCRFDKIKPVRESVTEALQLWKKISGKYVDGASDDSKLSASEQLGSEKNGEKRSNLADLMKKEASDGSTLSPDSASKGKGCFPEKAVGLLKKKAPVLSDKDFNPEFFQRLERRQSVEVVVPRRCKNNDEEESGLDDLNAMGSSNRLKNTQADDKQVKGRFDGNGSQARTSGDDKAGVVNGKETPGHHAPVSNTDNQSEGSFTSNRGNWSAIQRQLLQLERQQTNLMNMLQEFIGGSHDSMVTLEGRVRGLERIVEDMARDLSISSGRRANLTAGFGKYNSFANYPTGKYNGRAPGERGSQTDGAMRGRMWNSDMADDWFIPPHAASRNGQAGPRRSPRSEQYENEHMGNGRRGWDNKASGTIRFGEGPSARSVWQASKDEATLEAIRVAGEDGAVPRPTRVAVAPEAEAMGDDDNEGQERDPIWVSWSNAMHSLRVGDIDAAYAEVLCAGDQHLVIKLMDKTGPSLDQMSNEIANEALNFISQFLLDHSLYDICLSWSQQLLELVLQDGADTFGVPMELKTEILYNLQDACSTMDPPEDWEGPAPEQLVVQLASVWEIDLQQFDK.

Positions 1–26 (MSTPTTSGSAAKPTRPARSSSLATRS) are disordered. Over residues 17 to 26 (ARSSSLATRS) the composition is skewed to polar residues. 5 HEAT repeats span residues 76 to 113 (ETLPMFLNCLYDSCSDPKPAVKKECLHLLSYVCSLHCD), 117 to 154 (AHLTKIIAQIVKRLKDSDSGVRDACRDTIGALSGIYLK), 167 to 204 (LAVGLFVKPLFEAMGEQNKVVQSGASMCMARMVESAAS), 208 to 245 (TSFQKLCPRICKLLSNSSFLAKASLLPVVSSLSQVGAI), and 248 to 285 (QSLESLLESIHDCLGSTDWVTRKAAAETLTALASHSSG). The segment at 329-353 (DGASDDSKLSASEQLGSEKNGEKRS) is disordered. A Phosphoserine modification is found at S414. The interval 426–504 (NDEEESGLDD…QSEGSFTSNR (79 aa)) is disordered. A compositionally biased stretch (polar residues) spans 439-448 (MGSSNRLKNT). Residues 449–459 (QADDKQVKGRF) show a composition bias toward basic and acidic residues. Over residues 489–504 (VSNTDNQSEGSFTSNR) the composition is skewed to polar residues. Residues 508–561 (SAIQRQLLQLERQQTNLMNMLQEFIGGSHDSMVTLEGRVRGLERIVEDMARDLS) are a coiled coil. The segment at 615 to 670 (DDWFIPPHAASRNGQAGPRRSPRSEQYENEHMGNGRRGWDNKASGTIRFGEGPSAR) is disordered. The span at 636–654 (PRSEQYENEHMGNGRRGWD) shows a compositional bias: basic and acidic residues.

As to quaternary structure, interacts with WAV3. In terms of tissue distribution, expressed in roots, hypocotyls, stems, flowers, siliques, inflorescences, petioles, cotyledons, and leaves. Particularly present in root tips and shoot meristems.

It localises to the cytoplasm. It is found in the cytoskeleton. Functionally, plant-specific microtubule-associated protein (MAP) that regulates the orientation of cortical microtubules and the direction of organ growth. Determines microtubule organization by modulating microtubule severing. In Arabidopsis thaliana (Mouse-ear cress), this protein is Microtubule-associated protein TORTIFOLIA1.